The chain runs to 349 residues: UDP-3-O-acylglucosamine N-acyltransferase 1 (349 aa).

His241 serves as the catalytic Proton acceptor.

The protein belongs to the transferase hexapeptide repeat family. LpxD subfamily. In terms of assembly, homotrimer.

It catalyses the reaction a UDP-3-O-[(3R)-3-hydroxyacyl]-alpha-D-glucosamine + a (3R)-hydroxyacyl-[ACP] = a UDP-2-N,3-O-bis[(3R)-3-hydroxyacyl]-alpha-D-glucosamine + holo-[ACP] + H(+). Its pathway is bacterial outer membrane biogenesis; LPS lipid A biosynthesis. Functionally, catalyzes the N-acylation of UDP-3-O-acylglucosamine using 3-hydroxyacyl-ACP as the acyl donor. Is involved in the biosynthesis of lipid A, a phosphorylated glycolipid that anchors the lipopolysaccharide to the outer membrane of the cell. This is UDP-3-O-acylglucosamine N-acyltransferase 1 from Gloeobacter violaceus (strain ATCC 29082 / PCC 7421).